A 105-amino-acid polypeptide reads, in one-letter code: ATP synthase subunit c (105 aa).

Helical transmembrane passes span 32–52 and 78–98; these read SILGAMIGLGIAAFGGAIGMG and VAMAMIEAQVIYTLVFAIIAI.

This sequence belongs to the ATPase C chain family. F-type ATPases have 2 components, F(1) - the catalytic core - and F(0) - the membrane proton channel. F(1) has five subunits: alpha(3), beta(3), gamma(1), delta(1), epsilon(1). F(0) has three main subunits: a(1), b(2) and c(10-14). The alpha and beta chains form an alternating ring which encloses part of the gamma chain. F(1) is attached to F(0) by a central stalk formed by the gamma and epsilon chains, while a peripheral stalk is formed by the delta and b chains.

The protein localises to the cell inner membrane. Its function is as follows. F(1)F(0) ATP synthase produces ATP from ADP in the presence of a proton or sodium gradient. F-type ATPases consist of two structural domains, F(1) containing the extramembraneous catalytic core and F(0) containing the membrane proton channel, linked together by a central stalk and a peripheral stalk. During catalysis, ATP synthesis in the catalytic domain of F(1) is coupled via a rotary mechanism of the central stalk subunits to proton translocation. Key component of the F(0) channel; it plays a direct role in translocation across the membrane. A homomeric c-ring of between 10-14 subunits forms the central stalk rotor element with the F(1) delta and epsilon subunits. This Helicobacter pylori (strain ATCC 700392 / 26695) (Campylobacter pylori) protein is ATP synthase subunit c.